Reading from the N-terminus, the 220-residue chain is Inner membrane-spanning protein YciB (220 aa).

6 helical membrane passes run 20–40 (EVPPLLKLALELGPLLVFFFA), 57–77 (IGAPIFLATALFMAATVIALA), 86–106 (LPIMPLVSGIVVLVFGALTLW), 123–143 (LFGGILLGGLFFGKSLLGYVF), 156–176 (KLTLRWGLFFIFLAIVNEIVW), and 187–207 (FKVWGIMPITIVFTLLQMPLI).

Belongs to the YciB family.

It localises to the cell inner membrane. In terms of biological role, plays a role in cell envelope biogenesis, maintenance of cell envelope integrity and membrane homeostasis. This Brucella abortus (strain S19) protein is Inner membrane-spanning protein YciB.